Reading from the N-terminus, the 113-residue chain is ATP-dependent Clp protease adapter protein ClpS (113 aa).

The span at 1–11 shows a compositional bias: pro residues; it reads MTRPTIPPGPP. Disordered regions lie at residues 1–24 and 92–113; these read MTRP…ERTE and TAHA…SEGE.

Belongs to the ClpS family. As to quaternary structure, binds to the N-terminal domain of the chaperone ClpA.

Its function is as follows. Involved in the modulation of the specificity of the ClpAP-mediated ATP-dependent protein degradation. This is ATP-dependent Clp protease adapter protein ClpS from Deinococcus radiodurans (strain ATCC 13939 / DSM 20539 / JCM 16871 / CCUG 27074 / LMG 4051 / NBRC 15346 / NCIMB 9279 / VKM B-1422 / R1).